Reading from the N-terminus, the 106-residue chain is Small ribosomal subunit protein uS10 (106 aa).

The protein belongs to the universal ribosomal protein uS10 family. As to quaternary structure, part of the 30S ribosomal subunit.

Involved in the binding of tRNA to the ribosomes. The protein is Small ribosomal subunit protein uS10 of Wolbachia pipientis subsp. Culex pipiens (strain wPip).